We begin with the raw amino-acid sequence, 623 residues long: GATA zinc finger domain-containing protein 6 (623 aa).

3 disordered regions span residues 137–156 (IISP…GNNF), 167–197 (INNN…TAST), and 245–289 (PTTT…TAST). Positions 167-179 (INNNSNNNNNNNN) are enriched in low complexity. Polar residues predominate over residues 185 to 197 (KQQTSKGSATAST). A GATA-type zinc finger spans residues 320 to 345 (CHSCGETQTSQWRRGPDGCKSLCNAC). Residues 398-509 (IQQQQQKDDH…SINHNDKLIN (112 aa)) are disordered. Low complexity predominate over residues 410–482 (LSRPSSFSSQ…TSPTISSESL (73 aa)). The span at 483–502 (NFSSATNTPTNLSPNLQSIN) shows a compositional bias: polar residues.

This chain is GATA zinc finger domain-containing protein 6 (gtaF), found in Dictyostelium discoideum (Social amoeba).